Consider the following 100-residue polypeptide: MIMKYFCSVMIAIALVGCTATPPPTQKAQQSKVSPTRTLDMEALCKAQAAQRYNTGAQKIAVTGFEQFQGSYEMRGNTFRKESFVCSFDADGQFLHLSMR.

The first 17 residues, 1–17 (MIMKYFCSVMIAIALVG), serve as a signal peptide directing secretion. Residue cysteine 18 is the site of N-palmitoyl cysteine attachment. Cysteine 18 is lipidated: S-diacylglycerol cysteine.

The protein resides in the cell membrane. This is an uncharacterized protein from Salmonella choleraesuis (strain SC-B67).